Consider the following 363-residue polypeptide: UDP-N-acetylglucosamine--N-acetylmuramyl-(pentapeptide) pyrophosphoryl-undecaprenol N-acetylglucosamine transferase (363 aa).

UDP-N-acetyl-alpha-D-glucosamine-binding positions include 10–12 (TAG), Asn-124, Arg-161, Ser-195, and Gln-291.

This sequence belongs to the glycosyltransferase 28 family. MurG subfamily.

The protein resides in the cell membrane. It catalyses the reaction di-trans,octa-cis-undecaprenyl diphospho-N-acetyl-alpha-D-muramoyl-L-alanyl-D-glutamyl-meso-2,6-diaminopimeloyl-D-alanyl-D-alanine + UDP-N-acetyl-alpha-D-glucosamine = di-trans,octa-cis-undecaprenyl diphospho-[N-acetyl-alpha-D-glucosaminyl-(1-&gt;4)]-N-acetyl-alpha-D-muramoyl-L-alanyl-D-glutamyl-meso-2,6-diaminopimeloyl-D-alanyl-D-alanine + UDP + H(+). It functions in the pathway cell wall biogenesis; peptidoglycan biosynthesis. Its function is as follows. Cell wall formation. Catalyzes the transfer of a GlcNAc subunit on undecaprenyl-pyrophosphoryl-MurNAc-pentapeptide (lipid intermediate I) to form undecaprenyl-pyrophosphoryl-MurNAc-(pentapeptide)GlcNAc (lipid intermediate II). This Streptomyces avermitilis (strain ATCC 31267 / DSM 46492 / JCM 5070 / NBRC 14893 / NCIMB 12804 / NRRL 8165 / MA-4680) protein is UDP-N-acetylglucosamine--N-acetylmuramyl-(pentapeptide) pyrophosphoryl-undecaprenol N-acetylglucosamine transferase.